A 288-amino-acid chain; its full sequence is Chemotaxis protein methyltransferase 2 (288 aa).

The 280-residue stretch at 1–280 (MNEIVITDTD…TGYYKPHKGK (280 aa)) folds into the CheR-type methyltransferase domain. Residues Asn76, Thr78, Arg82, Glu119, Asp145, 200–201 (NL), and 219–220 (RN) contribute to the S-adenosyl-L-methionine site.

It catalyses the reaction L-glutamyl-[protein] + S-adenosyl-L-methionine = [protein]-L-glutamate 5-O-methyl ester + S-adenosyl-L-homocysteine. Its function is as follows. Methylation of the membrane-bound methyl-accepting chemotaxis proteins (MCP) to form gamma-glutamyl methyl ester residues in MCP. This is Chemotaxis protein methyltransferase 2 (cheR2) from Vibrio cholerae serotype O1 (strain ATCC 39315 / El Tor Inaba N16961).